Reading from the N-terminus, the 26-residue chain is Mitochondrial import receptor subunit TOM7-2 (26 aa).

Belongs to the Tom7 family. As to quaternary structure, forms part of the preprotein translocase complex of the outer mitochondrial membrane (TOM complex).

It localises to the mitochondrion outer membrane. Its function is as follows. Seems to act as a modulator of the dynamics of the mitochondrial protein transport machinery. Seems to promote the dissociation of subunits of the outer membrane translocase. The polypeptide is Mitochondrial import receptor subunit TOM7-2 (TOM7-2) (Solanum tuberosum (Potato)).